The chain runs to 55 residues: Ferredoxin-1 (55 aa).

4Fe-4S ferredoxin-type domains are found at residues 2–27 (YKIEETCISCGACAAECPVNAIEQGD) and 28–55 (TIFVVNADTCIDCGNCANVCPVGAPVAE). Residues cysteine 8, cysteine 11, cysteine 14, cysteine 18, cysteine 37, cysteine 40, cysteine 43, and cysteine 47 each coordinate [4Fe-4S] cluster.

[4Fe-4S] cluster is required as a cofactor.

Ferredoxins are iron-sulfur proteins that transfer electrons in a wide variety of metabolic reactions. In Rhodospirillum rubrum, this protein is Ferredoxin-1.